The chain runs to 78 residues: Acyl carrier protein (78 aa).

The 76-residue stretch at M1 to K76 folds into the Carrier domain. S36 is modified (O-(pantetheine 4'-phosphoryl)serine).

Belongs to the acyl carrier protein (ACP) family. In terms of processing, 4'-phosphopantetheine is transferred from CoA to a specific serine of apo-ACP by AcpS. This modification is essential for activity because fatty acids are bound in thioester linkage to the sulfhydryl of the prosthetic group.

It localises to the cytoplasm. It participates in lipid metabolism; fatty acid biosynthesis. Functionally, carrier of the growing fatty acid chain in fatty acid biosynthesis. This chain is Acyl carrier protein, found in Helicobacter pylori (strain Shi470).